The sequence spans 60 residues: Antimicrobial peptide Eval151 (60 aa).

A signal peptide spans 1 to 23 (MKVLPVLFLTLLVLISIPAETFC). Arginine amide is present on arginine 36. The segment covering 36–54 (RGKRNDFFRSDVSRDDESH) has biased composition (basic and acidic residues). The disordered stretch occupies residues 36 to 60 (RGKRNDFFRSDVSRDDESHPSPGQK). Positions 37 to 60 (GKRNDFFRSDVSRDDESHPSPGQK) are excised as a propeptide.

The protein belongs to the non-disulfide-bridged peptide (NDBP) superfamily. As to expression, expressed by the venom gland.

It is found in the secreted. Functionally, probable antimicrobial peptide. Has no inhibitory activity against herpes simplex virus type 1 (HSV-1). The sequence is that of Antimicrobial peptide Eval151 from Euscorpiops validus (Scorpion).